The chain runs to 715 residues: Palmitoyltransferase ZDHHC5 (715 aa).

Over 1–13 (MPAESGKRFKPSK) the chain is Cytoplasmic. Residues 14–34 (YVPVSAAAIFLVGATTLFFAF) form a helical membrane-spanning segment. Residues 35–38 (TCPG) lie on the Extracellular side of the membrane. The helical transmembrane segment at 39 to 59 (LSLYVSPAVPIYNAIMFLFVL) threads the bilayer. Residues 60–148 (ANFSMATFMD…NCIGRRNYRY (89 aa)) are Cytoplasmic-facing. Position 91 is a phosphotyrosine; by LYN (Y91). The 51-residue stretch at 104-154 (KWCATCRFYRPPRCSHCSVCDNCVEEFDHHCPWVNNCIGRRNYRYFFLFLL) folds into the DHHC domain. C134 functions as the S-palmitoyl cysteine intermediate in the catalytic mechanism. Residues 149–169 (FFLFLLSLTAHIMGVFGFGLL) traverse the membrane as a helical segment. Over 170–191 (YVLYHIEELSGVRTAVTMAVMC) the chain is Extracellular. A helical membrane pass occupies residues 192 to 212 (VAGLFFIPVAGLTGFHVVLVA). The Cytoplasmic portion of the chain corresponds to 213–715 (RGRTTNEQVT…VGGTTYEISV (503 aa)). S247 carries the phosphoserine modification. Residues 289 to 715 (GELRRTKSKG…VGGTTYEISV (427 aa)) are disordered. T294 is modified (phosphothreonine). 2 positions are modified to phosphoserine: S296 and S299. Residue T303 is modified to Phosphothreonine. A Phosphoserine modification is found at S345. A phosphothreonine mark is found at T348 and T350. Over residues 359-373 (SSSSTSAAMPHSSSA) the composition is skewed to low complexity. Residues S380, S398, S406, and S409 each carry the phosphoserine modification. T411 bears the Phosphothreonine mark. 4 positions are modified to phosphoserine: S415, S425, S429, and S432. Residues 422–432 (SSGSRSSSLKS) are compositionally biased toward low complexity. Residue T436 is modified to Phosphothreonine. Residues 442–478 (QLQSIRSEGTTSTSYKSLANQTRNGSLSYDSLLTPSD) are compositionally biased toward polar residues. Position 529 is a phosphoserine (S529). Y533 carries the phosphotyrosine; by FYN modification. Phosphoserine is present on S554. An Omega-N-methylarginine modification is found at R617. A Phosphoserine modification is found at S621. Phosphothreonine is present on T659. A compositionally biased stretch (polar residues) spans 666–677 (LKTTYSKSNGQP). S684 and S694 each carry phosphoserine. An Omega-N-methylarginine modification is found at R697.

The protein belongs to the DHHC palmitoyltransferase family. ERF2/ZDHHC9 subfamily. Phosphorylation regulates association with endocytic proteins and its subcellular localization. Phosphorylation by LYN during fatty acid uptake leads to inactivation of the activity. In terms of processing, autopalmitoylated. Palmitoylation of the C-terminal tail regulates stimulation-dependent plasma membrane motility.

The protein resides in the cell membrane. Its subcellular location is the synapse. The enzyme catalyses L-cysteinyl-[protein] + hexadecanoyl-CoA = S-hexadecanoyl-L-cysteinyl-[protein] + CoA. Functionally, palmitoyltransferase that catalyzes the addition of palmitate onto various protein substrates such as CTNND2, CD36, GSDMD, NLRP3, NOD1, NOD2, STAT3 and S1PR1 thus plays a role in various biological processes including cell adhesion, inflammation, fatty acid uptake, bacterial sensing or cardiac functions. Plays an important role in the regulation of synapse efficacy by mediating palmitoylation of delta-catenin/CTNND2, thereby increasing synaptic delivery and surface stabilization of alpha-amino-3-hydroxy-5-methyl-4-isoxazole propionic acid receptors (AMPARs). Under basal conditions, remains at the synaptic membrane through FYN-mediated phosphorylation that prevents association with endocytic proteins. Neuronal activity enhances the internalization and trafficking of DHHC5 from spines to dendritic shafts where it palmitoylates delta-catenin/CTNND2. Regulates cell adhesion at the plasma membrane by palmitoylating GOLGA7B and DSG2. Plays a role in innate immune response by mediating the palmitoylation of NOD1 and NOD2 and their proper recruitment to the bacterial entry site and phagosomes. Also participates in fatty acid uptake by palmitoylating CD36 and thereby targeting it to the plasma membrane. Upon binding of fatty acids to CD36, gets phosphorylated by LYN leading to inactivation and subsequent CD36 caveolar endocytosis. Controls oligodendrocyte development by catalyzing STAT3 palmitoylation. Acts as a regulator of inflammatory response by mediating palmitoylation of NLRP3 and GSDMD. Palmitoylates NLRP3 to promote inflammasome assembly and activation. Activates pyroptosis by catalyzing palmitoylation of gasdermin-D (GSDMD), thereby promoting membrane translocation and pore formation of GSDMD. This chain is Palmitoyltransferase ZDHHC5, found in Homo sapiens (Human).